We begin with the raw amino-acid sequence, 86 residues long: Small ribosomal subunit protein bS18c (86 aa).

It belongs to the bacterial ribosomal protein bS18 family. Part of the 30S ribosomal subunit.

The protein localises to the plastid. The protein resides in the chloroplast. The sequence is that of Small ribosomal subunit protein bS18c from Pseudotsuga menziesii (Douglas-fir).